A 289-amino-acid chain; its full sequence is Glucosamine-6-phosphate deaminase 1 (289 aa).

Lys-64 bears the N6-acetyllysine mark. Asp-72 serves as the catalytic Proton acceptor; for enolization step. Asp-141 serves as the catalytic For ring-opening step. The active-site Proton acceptor; for ring-opening step is the His-143. Glu-148 serves as the catalytic For ring-opening step. At Thr-161 the chain carries Phosphothreonine.

This sequence belongs to the glucosamine/galactosamine-6-phosphate isomerase family. Homohexamer.

The protein localises to the cytoplasm. The enzyme catalyses alpha-D-glucosamine 6-phosphate + H2O = beta-D-fructose 6-phosphate + NH4(+). The protein operates within nucleotide-sugar biosynthesis; UDP-N-acetyl-alpha-D-glucosamine biosynthesis; alpha-D-glucosamine 6-phosphate from D-fructose 6-phosphate: step 1/1. With respect to regulation, allosterically activated by N-acetylglucosamine-6-phosphate (GlcNAc6P). Its function is as follows. Catalyzes the reversible conversion of alpha-D-glucosamine 6-phosphate (GlcN-6P) into beta-D-fructose 6-phosphate (Fru-6P) and ammonium ion, a regulatory reaction step in de novo uridine diphosphate-N-acetyl-alpha-D-glucosamine (UDP-GlcNAc) biosynthesis via hexosamine pathway. Deamination is coupled to aldo-keto isomerization mediating the metabolic flux from UDP-GlcNAc toward Fru-6P. At high ammonium level can drive amination and isomerization of Fru-6P toward hexosamines and UDP-GlcNAc synthesis. Has a role in fine tuning the metabolic fluctuations of cytosolic UDP-GlcNAc and their effects on hyaluronan synthesis that occur during tissue remodeling. Seems to trigger calcium oscillations in mammalian eggs. These oscillations serve as the essential trigger for egg activation and early development of the embryo. The polypeptide is Glucosamine-6-phosphate deaminase 1 (Pongo abelii (Sumatran orangutan)).